Consider the following 225-residue polypeptide: Riboflavin kinase (225 aa).

The unknown stretch occupies residues 1-89 (MPDIKYLKKL…SRIFSPDLDI (89 aa)). The tract at residues 90–225 (LELEGKVLKG…LKKQGTENQK (136 aa)) is riboflavin kinase. 99–104 (GLGEGQ) is a binding site for CDP. Positions 128 and 130 each coordinate Mg(2+). FMN-binding residues include threonine 185 and glutamate 193. 198 to 201 (IKLR) contacts CDP.

The protein belongs to the archaeal riboflavin kinase family. Mg(2+) serves as cofactor.

It catalyses the reaction riboflavin + CTP = CDP + FMN + H(+). The protein operates within cofactor biosynthesis; FMN biosynthesis; FMN from riboflavin (CTP route): step 1/1. Functionally, catalyzes the CTP-dependent phosphorylation of riboflavin (vitamin B2) to form flavin mononucleotide (FMN). The protein is Riboflavin kinase (ribK) of Methanosarcina barkeri (strain Fusaro / DSM 804).